Here is a 714-residue protein sequence, read N- to C-terminus: Fatty acid oxidation complex subunit alpha (714 aa).

Residues 1-190 (MEMASAFTLN…KLGLVDDVVP (190 aa)) form an enoyl-CoA hydratase region. The tract at residues 306–714 (APLNSVGILG…FWKTTATDLQ (409 aa)) is 3-hydroxyacyl-CoA dehydrogenase.

The protein in the N-terminal section; belongs to the enoyl-CoA hydratase/isomerase family. In the central section; belongs to the 3-hydroxyacyl-CoA dehydrogenase family. As to quaternary structure, heterotetramer of two alpha chains (FadJ) and two beta chains (FadI).

Its subcellular location is the cytoplasm. The enzyme catalyses a (3S)-3-hydroxyacyl-CoA = a (2E)-enoyl-CoA + H2O. The catalysed reaction is a 4-saturated-(3S)-3-hydroxyacyl-CoA = a (3E)-enoyl-CoA + H2O. It carries out the reaction a (3S)-3-hydroxyacyl-CoA + NAD(+) = a 3-oxoacyl-CoA + NADH + H(+). It catalyses the reaction (3S)-3-hydroxybutanoyl-CoA = (3R)-3-hydroxybutanoyl-CoA. It functions in the pathway lipid metabolism; fatty acid beta-oxidation. Catalyzes the formation of a hydroxyacyl-CoA by addition of water on enoyl-CoA. Also exhibits 3-hydroxyacyl-CoA epimerase and 3-hydroxyacyl-CoA dehydrogenase activities. In Shigella boydii serotype 18 (strain CDC 3083-94 / BS512), this protein is Fatty acid oxidation complex subunit alpha.